Here is a 173-residue protein sequence, read N- to C-terminus: Large ribosomal subunit protein bL12m (173 aa).

A mitochondrion-targeting transit peptide spans 1-33; the sequence is MFRIASRQTRNLRALSSSKNWARSLVNTRSFRA.

Belongs to the bacterial ribosomal protein bL12 family. As to quaternary structure, component of the mitochondrial large ribosomal subunit (mt-LSU). Mature yeast 74S mitochondrial ribosomes consist of a small (37S) and a large (54S) subunit. The 37S small subunit contains a 15S ribosomal RNA (15S mt-rRNA) and at least 32 different proteins. The 54S large subunit contains a 21S rRNA (21S mt-rRNA) and at least 45 different proteins.

It is found in the mitochondrion. Component of the mitochondrial ribosome (mitoribosome), a dedicated translation machinery responsible for the synthesis of mitochondrial genome-encoded proteins, including at least some of the essential transmembrane subunits of the mitochondrial respiratory chain. The mitoribosomes are attached to the mitochondrial inner membrane and translation products are cotranslationally integrated into the membrane. The protein is Large ribosomal subunit protein bL12m (mrpl12) of Schizosaccharomyces pombe (strain 972 / ATCC 24843) (Fission yeast).